The sequence spans 86 residues: Cytochrome c oxidase subunit 3 (86 aa).

Residues 1–15 (MAHQAHSYHMVDPSP) are Mitochondrial matrix-facing. Residues 16 to 34 (WPIFGAAAALLTTSGLVMW) form a helical membrane-spanning segment. Residues 35 to 40 (FHYNSS) lie on the Mitochondrial intermembrane side of the membrane. The chain crosses the membrane as a helical span at residues 41 to 66 (ILLAAGLLSMLLVMLQWWREIVREST). Residues 67–86 (FQGHHTPTVQKGLRYGMILF) lie on the Mitochondrial matrix side of the membrane.

Belongs to the cytochrome c oxidase subunit 3 family. In terms of assembly, component of the cytochrome c oxidase (complex IV, CIV), a multisubunit enzyme composed of 14 subunits. The complex is composed of a catalytic core of 3 subunits MT-CO1, MT-CO2 and MT-CO3, encoded in the mitochondrial DNA, and 11 supernumerary subunits COX4I, COX5A, COX5B, COX6A, COX6B, COX6C, COX7A, COX7B, COX7C, COX8 and NDUFA4, which are encoded in the nuclear genome. The complex exists as a monomer or a dimer and forms supercomplexes (SCs) in the inner mitochondrial membrane with NADH-ubiquinone oxidoreductase (complex I, CI) and ubiquinol-cytochrome c oxidoreductase (cytochrome b-c1 complex, complex III, CIII), resulting in different assemblies (supercomplex SCI(1)III(2)IV(1) and megacomplex MCI(2)III(2)IV(2)).

It is found in the mitochondrion inner membrane. The enzyme catalyses 4 Fe(II)-[cytochrome c] + O2 + 8 H(+)(in) = 4 Fe(III)-[cytochrome c] + 2 H2O + 4 H(+)(out). Functionally, component of the cytochrome c oxidase, the last enzyme in the mitochondrial electron transport chain which drives oxidative phosphorylation. The respiratory chain contains 3 multisubunit complexes succinate dehydrogenase (complex II, CII), ubiquinol-cytochrome c oxidoreductase (cytochrome b-c1 complex, complex III, CIII) and cytochrome c oxidase (complex IV, CIV), that cooperate to transfer electrons derived from NADH and succinate to molecular oxygen, creating an electrochemical gradient over the inner membrane that drives transmembrane transport and the ATP synthase. Cytochrome c oxidase is the component of the respiratory chain that catalyzes the reduction of oxygen to water. Electrons originating from reduced cytochrome c in the intermembrane space (IMS) are transferred via the dinuclear copper A center (CU(A)) of subunit 2 and heme A of subunit 1 to the active site in subunit 1, a binuclear center (BNC) formed by heme A3 and copper B (CU(B)). The BNC reduces molecular oxygen to 2 water molecules using 4 electrons from cytochrome c in the IMS and 4 protons from the mitochondrial matrix. The protein is Cytochrome c oxidase subunit 3 (MT-CO3) of Anas platyrhynchos (Mallard).